The following is a 77-amino-acid chain: UPF0401 protein ECP_3853 (77 aa).

It belongs to the UPF0401 family.

This is UPF0401 protein ECP_3853 from Escherichia coli O6:K15:H31 (strain 536 / UPEC).